The following is a 199-amino-acid chain: NADH-quinone oxidoreductase subunit C (199 aa).

Belongs to the complex I 30 kDa subunit family. As to quaternary structure, NDH-1 is composed of 14 different subunits. Subunits NuoB, C, D, E, F, and G constitute the peripheral sector of the complex.

The protein resides in the cell inner membrane. It carries out the reaction a quinone + NADH + 5 H(+)(in) = a quinol + NAD(+) + 4 H(+)(out). In terms of biological role, NDH-1 shuttles electrons from NADH, via FMN and iron-sulfur (Fe-S) centers, to quinones in the respiratory chain. The immediate electron acceptor for the enzyme in this species is believed to be ubiquinone. Couples the redox reaction to proton translocation (for every two electrons transferred, four hydrogen ions are translocated across the cytoplasmic membrane), and thus conserves the redox energy in a proton gradient. This chain is NADH-quinone oxidoreductase subunit C, found in Paramagnetospirillum magneticum (strain ATCC 700264 / AMB-1) (Magnetospirillum magneticum).